A 340-amino-acid polypeptide reads, in one-letter code: Eukaryotic translation initiation factor 3 subunit I (340 aa).

WD repeat units lie at residues 8–47 (GHER…RLGT), 50–91 (GHQG…KVWD), 150–189 (CTES…QLEN), 194–233 (EFDH…ILKT), and 291–330 (GHFG…FDFM).

Belongs to the eIF-3 subunit I family. In terms of assembly, component of the eukaryotic translation initiation factor 3 (eIF-3) complex.

Its subcellular location is the cytoplasm. Component of the eukaryotic translation initiation factor 3 (eIF-3) complex, which is involved in protein synthesis of a specialized repertoire of mRNAs and, together with other initiation factors, stimulates binding of mRNA and methionyl-tRNAi to the 40S ribosome. The eIF-3 complex specifically targets and initiates translation of a subset of mRNAs involved in cell proliferation. This chain is Eukaryotic translation initiation factor 3 subunit I (tif34), found in Neosartorya fischeri (strain ATCC 1020 / DSM 3700 / CBS 544.65 / FGSC A1164 / JCM 1740 / NRRL 181 / WB 181) (Aspergillus fischerianus).